A 174-amino-acid polypeptide reads, in one-letter code: Methylamine utilization protein MauL (174 aa).

Its pathway is one-carbon metabolism; methylamine degradation. Probably involved in TTQ prosthetic group biosynthesis. The chain is Methylamine utilization protein MauL (mauL) from Methylophilus methylotrophus (Bacterium W3A1).